The chain runs to 226 residues: MTTIKHLAIIMDGNARWADQHNLTKSEGHKAGADKIRELLPEFINLNIPYITLYTFSSENWQRSSSEVNFLIKLLSLYLKNELDSLHENGVKIKVIGRLNLLRSSLQKQINNAIELTQNNNKIKLCIAFSYGSRQEIVDACTKIIANGKKQVSENDIQHALYDPEMPDVDLLIRSGGVYRISNFLLWQAAYAELYFSQKYWPDFNKDDIHEAINDYSKRKRTFGKR.

The active site involves Asp-12. Asp-12 contributes to the Mg(2+) binding site. Residues 13–16 (GNAR), Trp-17, Lys-25, His-29, and 57–59 (SSE) contribute to the substrate site. Asn-60 serves as the catalytic Proton acceptor. Residues Trp-61, Arg-63, Arg-174, and 180-182 (RIS) each bind substrate. Glu-193 is a Mg(2+) binding site.

This sequence belongs to the UPP synthase family. In terms of assembly, homodimer. The cofactor is Mg(2+).

Catalyzes the condensation of isopentenyl diphosphate (IPP) with allylic pyrophosphates generating different type of terpenoids. This is Isoprenyl transferase from Rickettsia typhi (strain ATCC VR-144 / Wilmington).